The primary structure comprises 159 residues: Ribosomal RNA large subunit methyltransferase H (159 aa).

Residues L76, G108, and F127–F132 contribute to the S-adenosyl-L-methionine site.

Belongs to the RNA methyltransferase RlmH family. Homodimer.

The protein resides in the cytoplasm. The catalysed reaction is pseudouridine(1915) in 23S rRNA + S-adenosyl-L-methionine = N(3)-methylpseudouridine(1915) in 23S rRNA + S-adenosyl-L-homocysteine + H(+). Its function is as follows. Specifically methylates the pseudouridine at position 1915 (m3Psi1915) in 23S rRNA. The sequence is that of Ribosomal RNA large subunit methyltransferase H from Staphylococcus aureus (strain MSSA476).